The sequence spans 323 residues: ATP synthase gamma chain (323 aa).

The interval 206-240 (NPIVNLVGFGYKERGVKPINNRRATSDIVGESKSI) is insert.

The protein belongs to the ATPase gamma chain family. As to quaternary structure, F-type ATPases have 2 components, CF(1) - the catalytic core - and CF(0) - the membrane proton channel. CF(1) has five subunits: alpha(3), beta(3), gamma(1), delta(1), epsilon(1). CF(0) has three main subunits: a, b and c.

Its subcellular location is the cell inner membrane. Functionally, produces ATP from ADP in the presence of a proton gradient across the membrane. The gamma chain is believed to be important in regulating ATPase activity and the flow of protons through the CF(0) complex. This is ATP synthase gamma chain from Rickettsia conorii (strain ATCC VR-613 / Malish 7).